The sequence spans 404 residues: Glucoside xylosyltransferase 1 (404 aa).

At 1-6 (MRRYLR) the chain is on the cytoplasmic side. Residues 7–29 (VVGLCLACGFCSLLYAFSQLAVS) form a helical; Signal-anchor for type II membrane protein membrane-spanning segment. Residues 30-404 (LEEGAAGGRR…NRYDTPPKER (375 aa)) lie on the Lumenal side of the membrane. Residue Asn-201 is glycosylated (N-linked (GlcNAc...) asparagine).

It belongs to the glycosyltransferase 8 family.

Its subcellular location is the membrane. It catalyses the reaction 3-O-(beta-D-glucosyl)-L-seryl-[EGF-like domain protein] + UDP-alpha-D-xylose = 3-O-[alpha-D-xylosyl-(1-&gt;3)-beta-D-glucosyl]-L-seryl-[EGF-like domain protein] + UDP + H(+). Glycosyltransferase which elongates the O-linked glucose attached to EGF-like repeats in the extracellular domain of Notch proteins by catalyzing the addition of xylose. The chain is Glucoside xylosyltransferase 1 (Gxylt1) from Mus musculus (Mouse).